Here is a 316-residue protein sequence, read N- to C-terminus: WSCD family member GA21586 (316 aa).

Residues 8–28 (FFGVSATIIIYIGGVLFLSMN) form a helical membrane-spanning segment. Asparagine 78, asparagine 150, asparagine 226, and asparagine 232 each carry an N-linked (GlcNAc...) asparagine glycan.

It belongs to the WSCD family.

Its subcellular location is the membrane. The chain is WSCD family member GA21586 from Drosophila pseudoobscura pseudoobscura (Fruit fly).